Here is a 119-residue protein sequence, read N- to C-terminus: MPIDTNTEVKAIARYIRMSPFKVRRVLDQIRGISYREALIILEFMPYRSCVPIRKVLCSAVANAENNKGIDPDTLVISKAFADQGPCLPRYRPRAQGRAYKIRKPTCHITVAVASLVDD.

Belongs to the universal ribosomal protein uL22 family. In terms of assembly, part of the 50S ribosomal subunit.

This protein binds specifically to 23S rRNA; its binding is stimulated by other ribosomal proteins, e.g. L4, L17, and L20. It is important during the early stages of 50S assembly. It makes multiple contacts with different domains of the 23S rRNA in the assembled 50S subunit and ribosome. In terms of biological role, the globular domain of the protein is located near the polypeptide exit tunnel on the outside of the subunit, while an extended beta-hairpin is found that lines the wall of the exit tunnel in the center of the 70S ribosome. This Trichodesmium erythraeum (strain IMS101) protein is Large ribosomal subunit protein uL22.